We begin with the raw amino-acid sequence, 93 residues long: Cobalt transport protein CbiN (93 aa).

The next 2 membrane-spanning stretches (helical) occupy residues 5-25 (LMLLAMVVALVILPFFINHGG) and 63-83 (LLFTLQGSLGAAVIFYILGYC).

The protein belongs to the CbiN family. As to quaternary structure, forms an energy-coupling factor (ECF) transporter complex composed of an ATP-binding protein (A component, CbiO), a transmembrane protein (T component, CbiQ) and 2 possible substrate-capture proteins (S components, CbiM and CbiN) of unknown stoichimetry.

It localises to the cell inner membrane. It participates in cofactor biosynthesis; adenosylcobalamin biosynthesis. Functionally, part of the energy-coupling factor (ECF) transporter complex CbiMNOQ involved in cobalt import. The polypeptide is Cobalt transport protein CbiN (Salmonella gallinarum (strain 287/91 / NCTC 13346)).